A 454-amino-acid polypeptide reads, in one-letter code: Enolase (454 aa).

Gln167 is a binding site for (2R)-2-phosphoglycerate. Glu209 acts as the Proton donor in catalysis. 3 residues coordinate Mg(2+): Asp250, Glu312, and Asp339. The (2R)-2-phosphoglycerate site is built by Lys364, Arg393, Ser394, and Lys415. Lys364 serves as the catalytic Proton acceptor.

The protein belongs to the enolase family. Requires Mg(2+) as cofactor.

Its subcellular location is the cytoplasm. It localises to the secreted. It is found in the cell surface. The catalysed reaction is (2R)-2-phosphoglycerate = phosphoenolpyruvate + H2O. It functions in the pathway carbohydrate degradation; glycolysis; pyruvate from D-glyceraldehyde 3-phosphate: step 4/5. In terms of biological role, catalyzes the reversible conversion of 2-phosphoglycerate (2-PG) into phosphoenolpyruvate (PEP). It is essential for the degradation of carbohydrates via glycolysis. This chain is Enolase, found in Mycoplasmopsis agalactiae (strain NCTC 10123 / CIP 59.7 / PG2) (Mycoplasma agalactiae).